The chain runs to 294 residues: tRNA pseudouridine synthase B (294 aa).

The active-site Nucleophile is Asp38.

Belongs to the pseudouridine synthase TruB family. Type 1 subfamily.

It carries out the reaction uridine(55) in tRNA = pseudouridine(55) in tRNA. Responsible for synthesis of pseudouridine from uracil-55 in the psi GC loop of transfer RNAs. The protein is tRNA pseudouridine synthase B of Clostridium perfringens (strain SM101 / Type A).